A 91-amino-acid chain; its full sequence is MSITTERKQQLIKEYAITENDTGSTAVQCAILTERINNLTEHFKSNHKDHTSRRGLLILVGRRRRLLNYIKKNNVSEYLDLISKLGIRKIK.

It belongs to the universal ribosomal protein uS15 family. As to quaternary structure, part of the 30S ribosomal subunit. Forms a bridge to the 50S subunit in the 70S ribosome, contacting the 23S rRNA.

One of the primary rRNA binding proteins, it binds directly to 16S rRNA where it helps nucleate assembly of the platform of the 30S subunit by binding and bridging several RNA helices of the 16S rRNA. Its function is as follows. Forms an intersubunit bridge (bridge B4) with the 23S rRNA of the 50S subunit in the ribosome. This chain is Small ribosomal subunit protein uS15, found in Rickettsia prowazekii (strain Madrid E).